Consider the following 553-residue polypeptide: Peroxiredoxin-2A (553 aa).

In terms of domain architecture, Thioredoxin spans 4–160 (IDVGDFVPDG…LMKMTTTTMS (157 aa)). The active-site Cysteine sulfenic acid (-SOH) intermediate is the cysteine 51. The F-box domain maps to 156-201 (TTTMSNLPTDLLEEIISRVPRKYMRAVRLTCKRWNGMFKSQSFTKM).

This sequence belongs to the peroxiredoxin family. Prx5 subfamily. Monomer.

It catalyses the reaction [glutaredoxin]-dithiol + a hydroperoxide = [glutaredoxin]-disulfide + an alcohol + H2O. Functionally, thiol-specific peroxidase that catalyzes the reduction of hydrogen peroxide and organic hydroperoxides to water and alcohols, respectively. Plays a role in cell protection against oxidative stress by detoxifying peroxides. May be involved in intracellular redox signaling. This Arabidopsis thaliana (Mouse-ear cress) protein is Peroxiredoxin-2A (PRXIIA).